We begin with the raw amino-acid sequence, 608 residues long: MWRLPGRSALRGVRSVVERRSRAEAGTHEAVRAMERAVVRCVPSEPKLSLSFALADGSHKNMQRDQSEPLGRALSRIATNALKGHAKVAAAKKSRKNRAHSSGGAACEATGPEPVATCEPVVKLYYREEAVAEDVLNVDAWQDGAVLQIGDVKYKVERNPPTFTELQLPRYIMAGFPVCPKLGVEFGDPASSVFRWYKEVKPGAAEPGDSGPASSSHSSQPSAWIETGVDERVYTPCNADIGLRLRLHCTPGNGQRFGPSRELESLCPVEAGPGTCTFDHRHLYTKKVTEDSFIRTVSYNILADTYAQTEFSRTVLYPYCAPYALELDYRQNLIQKELTGYNADLICLQEVDRAVFSDSLVPALEAFGLEGVFRIKQHEGLATFYRKSKFRLLSQHDISFQEALKSDPLHKELLEKLALNPLAQEKVLQRSSVLQISVLQSTTDSSKKICVANTHLYWHPKGGYIRLIQMEVALVHIRHVSRDLYPGIPVIFCGDFNSTPSTGMYHFVISGSIAEDHEDWASNGEEERCSMPLSHCFKLKSACGEPAYTNYVGGFHGCLDYIFIDLNTLEVEQVIPLPSHEEVTTHQALPSVSHPSDHIALVCDLKWK.

The transit peptide at 1-16 (MWRLPGRSALRGVRSV) directs the protein to the mitochondrion. The segment covering 90–99 (AAKKSRKNRA) has biased composition (basic residues). The interval 90-111 (AAKKSRKNRAHSSGGAACEATG) is disordered. Position 216 is a phosphoserine (Ser216). Mg(2+)-binding residues include Glu350, Asp495, and Asn497. Asp495 (proton donor/acceptor) is an active-site residue.

It belongs to the CCR4/nocturin family. It depends on Mg(2+) as a cofactor.

The protein resides in the mitochondrion matrix. The catalysed reaction is Exonucleolytic cleavage of poly(A) to 5'-AMP.. Enzyme that cleaves 2',5'-phosphodiester bond linking adenosines of the 5'-triphosphorylated oligoadenylates, triphosphorylated oligoadenylates referred as 2-5A modulates the 2-5A system. Degrades triphosphorylated 2-5A to produce AMP and ATP. Also cleaves 3',5'-phosphodiester bond of oligoadenylates. Plays a role as a negative regulator of the 2-5A system that is one of the major pathways for antiviral and antitumor functions induced by interferons (IFNs). Suppression of this enzyme increases cellular 2-5A levels and decreases viral replication in cultured small-airway epithelial cells. This Mus musculus (Mouse) protein is 2',5'-phosphodiesterase 12 (Pde12).